The primary structure comprises 312 residues: Ribosomal protein L11 methyltransferase (312 aa).

Positions 160, 181, 203, and 246 each coordinate S-adenosyl-L-methionine.

This sequence belongs to the methyltransferase superfamily. PrmA family.

The protein localises to the cytoplasm. The catalysed reaction is L-lysyl-[protein] + 3 S-adenosyl-L-methionine = N(6),N(6),N(6)-trimethyl-L-lysyl-[protein] + 3 S-adenosyl-L-homocysteine + 3 H(+). Its function is as follows. Methylates ribosomal protein L11. The sequence is that of Ribosomal protein L11 methyltransferase from Staphylococcus aureus (strain MRSA252).